A 418-amino-acid chain; its full sequence is Glutamyl-tRNA reductase (418 aa).

Substrate-binding positions include 49–52, Ser109, 114–116, and Gln120; these read TCNR and EPQ. Catalysis depends on Cys50, which acts as the Nucleophile. 189 to 194 contributes to the NADP(+) binding site; it reads GAGETI.

The protein belongs to the glutamyl-tRNA reductase family. In terms of assembly, homodimer.

The enzyme catalyses (S)-4-amino-5-oxopentanoate + tRNA(Glu) + NADP(+) = L-glutamyl-tRNA(Glu) + NADPH + H(+). It participates in porphyrin-containing compound metabolism; protoporphyrin-IX biosynthesis; 5-aminolevulinate from L-glutamyl-tRNA(Glu): step 1/2. Catalyzes the NADPH-dependent reduction of glutamyl-tRNA(Glu) to glutamate 1-semialdehyde (GSA). This Salmonella choleraesuis (strain SC-B67) protein is Glutamyl-tRNA reductase.